The chain runs to 707 residues: Translation initiation factor eIF2B subunit epsilon (707 aa).

2 disordered regions span residues 489 to 526 (HDDIESDESGDEGDKSGGKIKNNKNNDDNPIEPDSVKF) and 686 to 707 (AEEESDDSDDSDDDDDDSDESD). A W2 domain is found at 516 to 693 (DNPIEPDSVK…KSAEEESDDS (178 aa)). Over residues 688–707 (EESDDSDDSDDDDDDSDESD) the composition is skewed to acidic residues.

This sequence belongs to the eIF-2B gamma/epsilon subunits family. Component of the translation initiation factor 2B (eIF2B) complex which is a heterodecamer of two sets of five different subunits: alpha, beta, gamma, delta and epsilon. Subunits alpha, beta and delta comprise a regulatory subcomplex and subunits epsilon and gamma comprise a catalytic subcomplex. Within the complex, the hexameric regulatory complex resides at the center, with the two heterodimeric catalytic subcomplexes bound on opposite sides.

It is found in the cytoplasm. It localises to the cytosol. Functionally, acts as a component of the translation initiation factor 2B (eIF2B) complex, which catalyzes the exchange of GDP for GTP on eukaryotic initiation factor 2 (eIF2) gamma subunit. Its guanine nucleotide exchange factor activity is repressed when bound to eIF2 complex phosphorylated on the alpha subunit, thereby limiting the amount of methionyl-initiator methionine tRNA available to the ribosome and consequently global translation is repressed. In Dictyostelium discoideum (Social amoeba), this protein is Translation initiation factor eIF2B subunit epsilon (eif2b5).